The following is an 80-amino-acid chain: Large ribosomal subunit protein uL24 (80 aa).

Belongs to the universal ribosomal protein uL24 family. In terms of assembly, part of the 50S ribosomal subunit.

One of two assembly initiator proteins, it binds directly to the 5'-end of the 23S rRNA, where it nucleates assembly of the 50S subunit. In terms of biological role, one of the proteins that surrounds the polypeptide exit tunnel on the outside of the subunit. This chain is Large ribosomal subunit protein uL24, found in Chlorobaculum tepidum (strain ATCC 49652 / DSM 12025 / NBRC 103806 / TLS) (Chlorobium tepidum).